Here is a 47-residue protein sequence, read N- to C-terminus: Potassium channel toxin alpha-KTx 7.1 (47 aa).

An N-terminal signal peptide occupies residues 1–12 (RGSVDYKDDDDK). Intrachain disulfides connect cysteine 16-cysteine 37, cysteine 22-cysteine 42, and cysteine 26-cysteine 44.

The protein belongs to the short scorpion toxin superfamily. Potassium channel inhibitor family. Alpha-KTx 07 subfamily. Expressed by the venom gland.

The protein resides in the secreted. Its function is as follows. Potent inhibitor of the A-type voltage-gated potassium channels. Most potent inhibitor of Kv1.2/KCNA2 channels. Reversibly block the Shaker B potassium-channels (Kv1.1 sub-family). The sequence is that of Potassium channel toxin alpha-KTx 7.1 (PTX-1) from Pandinus imperator (Emperor scorpion).